The sequence spans 532 residues: Probable cytochrome P450 524A1 (532 aa).

A helical membrane pass occupies residues 8–28; the sequence is FIIFILLAALAVFVSEATSKV. C478 provides a ligand contact to heme.

This sequence belongs to the cytochrome P450 family. The cofactor is heme.

The protein localises to the membrane. This Dictyostelium discoideum (Social amoeba) protein is Probable cytochrome P450 524A1 (cyp524A1).